The sequence spans 481 residues: Tryptophan biosynthesis protein TrpCF (481 aa).

An indole-3-glycerol phosphate synthase region spans residues 1 to 283 (MKMTDFNTQQ…LAVRKVTLGE (283 aa)). The segment at 284–481 (NKVCGLTHPD…QAAFHAIRNY (198 aa)) is N-(5'-phosphoribosyl)anthranilate isomerase.

This sequence in the N-terminal section; belongs to the TrpC family. In the C-terminal section; belongs to the TrpF family. Monomer.

The catalysed reaction is N-(5-phospho-beta-D-ribosyl)anthranilate = 1-(2-carboxyphenylamino)-1-deoxy-D-ribulose 5-phosphate. It catalyses the reaction 1-(2-carboxyphenylamino)-1-deoxy-D-ribulose 5-phosphate + H(+) = (1S,2R)-1-C-(indol-3-yl)glycerol 3-phosphate + CO2 + H2O. Its pathway is amino-acid biosynthesis; L-tryptophan biosynthesis; L-tryptophan from chorismate: step 3/5. The protein operates within amino-acid biosynthesis; L-tryptophan biosynthesis; L-tryptophan from chorismate: step 4/5. Bifunctional enzyme that catalyzes two sequential steps of tryptophan biosynthetic pathway. The first reaction is catalyzed by the isomerase, coded by the TrpF domain; the second reaction is catalyzed by the synthase, coded by the TrpC domain. This chain is Tryptophan biosynthesis protein TrpCF (trpC), found in Vibrio parahaemolyticus serotype O3:K6 (strain RIMD 2210633).